A 370-amino-acid chain; its full sequence is Peptidyl-prolyl cis-trans isomerase D (370 aa).

Residue Ser5 is modified to Phosphoserine. Residues 19 to 183 (FFDVDIGGER…KLCVIAECGE (165 aa)) enclose the PPIase cyclophilin-type domain. Lys171 is modified (N6-acetyllysine). The interval 185-215 (KEGDDGGIFPKDGSGDSHPDFPEDADIDLKD) is chaperone activity. Ser198 is subject to Phosphoserine. The segment at 214–370 (KDVDKILLIT…EKAVYAKMFA (157 aa)) is interaction with HSP90AB1. TPR repeat units follow at residues 223-256 (TEDLKNIGNTFFKSQNWEMAIKKYAEVLRYVDSS), 273-306 (LSCVLNIGACKLKMSNWQGAIDSCLEALELDPSN), and 307-340 (TKALYRRAQGWQGLKEYDQALADLKKAQGIAPED).

It belongs to the cyclophilin-type PPIase family. PPIase D subfamily. Identified in ESR1 or NR3C1/GCR steroid receptor-chaperone complexes. Found in HSP90 chaperone complexes with kinase clients LCK or EIF2AK1. Two monomers associate with one HSP90 homodimer. Interacts with HSP90AA1. Interacts with HSP90AB1; PPID and FKBP4 compete for binding to HSP90AB1 and the interaction is mutually exclusive with the PPID:HSPA8 interaction. Interacts with HSPA8; PPID and STIP1 but not FKBP4 compete for binding to HSPA8 and the interaction is mutually exclusive with the PPID:HSP90AB1 interaction. Interacts with S100A1 and S100A2; the interactions dissociate the PPID:HSP90AA1 interaction. Interacts with S100A6. Interacts with MYB, ILF2, XRCC6, RACK1 and RPS3. Interacts with cytoplasmic dynein 1 intermediate chain (DYNC1I1 or DYNC1I2). In terms of tissue distribution, widely expressed.

The protein resides in the cytoplasm. It is found in the nucleus. The protein localises to the nucleolus. Its subcellular location is the nucleoplasm. It carries out the reaction [protein]-peptidylproline (omega=180) = [protein]-peptidylproline (omega=0). With respect to regulation, less sensitive to inhibition by cyclosporin A than is CYP-18. Functionally, PPIase that catalyzes the cis-trans isomerization of proline imidic peptide bonds in oligopeptides and may therefore assist protein folding. Proposed to act as a co-chaperone in HSP90 complexes such as in unligated steroid receptors heterocomplexes. Different co-chaperones seem to compete for association with HSP90 thus establishing distinct HSP90-co-chaperone-receptor complexes with the potential to exert tissue-specific receptor activity control. May have a preference for estrogen receptor complexes and is not found in glucocorticoid receptor complexes. May be involved in cytoplasmic dynein-dependent movement of the receptor from the cytoplasm to the nucleus. May regulate MYB by inhibiting its DNA-binding activity. Involved in regulation of AHR signaling by promoting the formation of the AHR:ARNT dimer; the function is independent of HSP90 but requires the chaperone activity. Involved in regulation of UV radiation-induced apoptosis. Promotes cell viability in anaplastic lymphoma kinase-positive anaplastic large-cell lymphoma (ALK+ ALCL) cell lines. (Microbial infection) May be involved in hepatitis C virus (HCV) replication and release. The chain is Peptidyl-prolyl cis-trans isomerase D from Homo sapiens (Human).